The primary structure comprises 468 residues: Protein ABHD15 (468 aa).

A signal peptide spans 1–23 (MPPWGAALALILAVLALLGLLGP). Residues 33–61 (VGERTLPGAQDRDDGEEADGGGPADQFSD) form a disordered region. Residues Asp360 and His391 each act as charge relay system in the active site. The residue at position 434 (Ser434) is a Phosphoserine.

This sequence belongs to the AB hydrolase superfamily. AB hydrolase 4 family. In terms of assembly, interacts with PDE3B; this interaction regulates PDE3B's stability and expression and, thereby, impacts the antilipolytic action of insulin.

The protein resides in the secreted. Functionally, may regulate adipocyte lipolysis and liver lipid accumulation. This chain is Protein ABHD15, found in Homo sapiens (Human).